The following is a 144-amino-acid chain: Sentan (144 aa).

The disordered stretch occupies residues 1–31 (MCGCRASVPSTKHYSVNPAPTTRSPPAAAGM). Positions 18–29 (PAPTTRSPPAAA) are enriched in low complexity.

The protein belongs to the S-100 family.

It is found in the cell projection. The protein resides in the cilium. Its function is as follows. May be a component of the linker structure that bridges the ciliary membrane and peripheral singlet microtubules. This is Sentan from Gallus gallus (Chicken).